We begin with the raw amino-acid sequence, 238 residues long: 1-(5-phosphoribosyl)-5-[(5-phosphoribosylamino)methylideneamino] imidazole-4-carboxamide isomerase (238 aa).

Asp-8 (proton acceptor) is an active-site residue. Asp-129 serves as the catalytic Proton donor.

This sequence belongs to the HisA/HisF family.

It is found in the cytoplasm. The catalysed reaction is 1-(5-phospho-beta-D-ribosyl)-5-[(5-phospho-beta-D-ribosylamino)methylideneamino]imidazole-4-carboxamide = 5-[(5-phospho-1-deoxy-D-ribulos-1-ylimino)methylamino]-1-(5-phospho-beta-D-ribosyl)imidazole-4-carboxamide. Its pathway is amino-acid biosynthesis; L-histidine biosynthesis; L-histidine from 5-phospho-alpha-D-ribose 1-diphosphate: step 4/9. The protein is 1-(5-phosphoribosyl)-5-[(5-phosphoribosylamino)methylideneamino] imidazole-4-carboxamide isomerase of Anaeromyxobacter sp. (strain Fw109-5).